The following is a 3856-amino-acid chain: Hybrid PKS-NRPS synthetase traA (3856 aa).

In terms of domain architecture, Ketosynthase family 3 (KS3) spans 6–438 (PEPIAIVGSG…GTNGHAILEE (433 aa)). Active-site for beta-ketoacyl synthase activity residues include C179, H318, and H358. The interval 554-885 (IFTGQGAQWA…FSDALGFVWT (332 aa)) is malonyl-CoA:ACP transacylase (MAT) domain. Residues 943–1081 (HELLGVPSPN…GKVTVIYGTP (139 aa)) are N-terminal hotdog fold. Residues 943–1247 (HELLGVPSPN…LSMKPFSPAT (305 aa)) form a dehydratase (DH) domain region. Residues 943–1249 (HELLGVPSPN…MKPFSPATAD (307 aa)) enclose the PKS/mFAS DH domain. The active-site Proton acceptor; for dehydratase activity is the H975. The C-terminal hotdog fold stretch occupies residues 1096-1249 (MVDIQAEQFY…MKPFSPATAD (154 aa)). The Proton donor; for dehydratase activity role is filled by D1156. A methyltransferase (MT) domain region spans residues 1290–1456 (LACVAQQIVH…RKAGFSGIDS (167 aa)). The interval 1984–2158 (TYVLVGLSGR…ATSLDIGSIV (175 aa)) is ketoreductase (KR) domain. The Carrier 1 domain maps to 2266 to 2347 (ADALEILKEL…TLCQQALEKL (82 aa)). The residue at position 2307 (S2307) is an O-(pantetheine 4'-phosphoryl)serine. A disordered region spans residues 2351-2422 (ILPNVESGGP…SSTPATVLSN (72 aa)). Composition is skewed to low complexity over residues 2357 to 2369 (SGGP…SKPT) and 2399 to 2418 (TTSP…TPAT). Positions 2446–2884 (VKTELVSFQQ…FALFSDKELK (439 aa)) are condensation (C) domain. Residues 2910-3310 (QIAKENDDKV…GAMVFHNRIA (401 aa)) form an adenylation (A) domain region. The disordered stretch occupies residues 3403–3429 (SKTDRKALKELPLPQRSNHDTGDNTES). A Carrier 2 domain is found at 3428 to 3507 (ESLTETMLEL…DMTQKIEESL (80 aa)). S3467 carries the post-translational modification O-(pantetheine 4'-phosphoryl)serine. The reductase (R) domain stretch occupies residues 3544 to 3768 (VTGSGGFLGK…EMTPIHSAAS (225 aa)).

This sequence in the C-terminal section; belongs to the NRP synthetase family.

It participates in secondary metabolite biosynthesis. Its function is as follows. Hybrid PKS-NRPS synthetase; part of the tra gene cluster that produces terrestric acid. The clavatol biosynthesis cluster cla and the terrestric acid cluster tra are both involved in the production of peniphenones and penilactones. The non-reducing PKS claF is responsible for the formation of clavatol from successive condensations of 3 malonyl-CoA units, presumably with a simple acetyl-CoA starter unit, and 2 methylation steps. The esterase claE probably collaborates with claF by catalyzing the hydrolysis of ACP-bound acyl intermediates to free the ACP from stalled intermediates. The clavatol oxidase claD then converts clavatol to hydroxyclavatol. Spontaneous dehydration of hydroxyclavatol leads to the accumulation of the highly active ortho-quinone methide. On the other hand, the PKS-NRPS hybrid traA is involved in the formation of crustosic acid, with the help of traB and traD. The polyketide synthase module (PKS) of traA is responsible for the synthesis of the polyketide backbone via the condensation of an acetyl-CoA starter unit with 3 malonyl-CoA units. The downstream nonribosomal peptide synthetase (NRPS) module then amidates the carboxyl end of the polyketide with L-malic acid. Because traA lacks a designated enoylreductase (ER) domain, the required activity is provided the enoyl reductase traG. Crustosic acid undergoes decarboxylation and isomerization to the terrestric acid, catalyzed by the 2-oxoglutarate-dependent dioxygenase traH. Both acids are further converted to the 2 gamma-butyrolactones (R)-5-methyltetronic acid and (S)-5-carboxylmethyltetronic acid, with involvement of the cytochrome P450 monooxygenase claJ. Spontaneous addition of the methide to these gamma-butyrolactones leads to peniphenone D and penilactone D, which undergo again stereospecific attacking by methide to give penilactones A and B. In Penicillium crustosum (Blue mold fungus), this protein is Hybrid PKS-NRPS synthetase traA.